The chain runs to 182 residues: Ribosome-recycling factor (182 aa).

This sequence belongs to the RRF family.

Its subcellular location is the cytoplasm. Responsible for the release of ribosomes from messenger RNA at the termination of protein biosynthesis. May increase the efficiency of translation by recycling ribosomes from one round of translation to another. The polypeptide is Ribosome-recycling factor (Synechococcus sp. (strain WH7803)).